The chain runs to 258 residues: Ribosomal RNA small subunit methyltransferase J (258 aa).

S-adenosyl-L-methionine contacts are provided by residues 106–107 (RD), 122–123 (ER), and Asp181.

The protein belongs to the methyltransferase superfamily. RsmJ family.

The protein localises to the cytoplasm. The enzyme catalyses guanosine(1516) in 16S rRNA + S-adenosyl-L-methionine = N(2)-methylguanosine(1516) in 16S rRNA + S-adenosyl-L-homocysteine + H(+). In terms of biological role, specifically methylates the guanosine in position 1516 of 16S rRNA. The polypeptide is Ribosomal RNA small subunit methyltransferase J (Pseudoalteromonas atlantica (strain T6c / ATCC BAA-1087)).